The chain runs to 1131 residues: DNA polymerase II large subunit (1131 aa).

The protein belongs to the archaeal DNA polymerase II family. In terms of assembly, heterodimer of a large subunit and a small subunit.

It catalyses the reaction DNA(n) + a 2'-deoxyribonucleoside 5'-triphosphate = DNA(n+1) + diphosphate. The enzyme catalyses Exonucleolytic cleavage in the 3'- to 5'-direction to yield nucleoside 5'-phosphates.. Its function is as follows. Possesses two activities: a DNA synthesis (polymerase) and an exonucleolytic activity that degrades single-stranded DNA in the 3'- to 5'-direction. Has a template-primer preference which is characteristic of a replicative DNA polymerase. The polypeptide is DNA polymerase II large subunit (Methanococcus maripaludis (strain C7 / ATCC BAA-1331)).